Here is a 299-residue protein sequence, read N- to C-terminus: tRNA dimethylallyltransferase 2 (299 aa).

9–16 (GPTGVGKT) serves as a coordination point for ATP. A substrate-binding site is contributed by 11 to 16 (TGVGKT). Residues 34-37 (DSRQ) form an interaction with substrate tRNA region.

Belongs to the IPP transferase family. As to quaternary structure, monomer. It depends on Mg(2+) as a cofactor.

It catalyses the reaction adenosine(37) in tRNA + dimethylallyl diphosphate = N(6)-dimethylallyladenosine(37) in tRNA + diphosphate. Functionally, catalyzes the transfer of a dimethylallyl group onto the adenine at position 37 in tRNAs that read codons beginning with uridine, leading to the formation of N6-(dimethylallyl)adenosine (i(6)A). The sequence is that of tRNA dimethylallyltransferase 2 from Parabacteroides distasonis (strain ATCC 8503 / DSM 20701 / CIP 104284 / JCM 5825 / NCTC 11152).